The following is a 407-amino-acid chain: Phosphopentomutase (407 aa).

Mn(2+)-binding residues include aspartate 10, aspartate 307, histidine 312, aspartate 348, histidine 349, and histidine 360.

It belongs to the phosphopentomutase family. It depends on Mn(2+) as a cofactor.

It localises to the cytoplasm. It carries out the reaction 2-deoxy-alpha-D-ribose 1-phosphate = 2-deoxy-D-ribose 5-phosphate. The enzyme catalyses alpha-D-ribose 1-phosphate = D-ribose 5-phosphate. It functions in the pathway carbohydrate degradation; 2-deoxy-D-ribose 1-phosphate degradation; D-glyceraldehyde 3-phosphate and acetaldehyde from 2-deoxy-alpha-D-ribose 1-phosphate: step 1/2. Isomerase that catalyzes the conversion of deoxy-ribose 1-phosphate (dRib-1-P) and ribose 1-phosphate (Rib-1-P) to deoxy-ribose 5-phosphate (dRib-5-P) and ribose 5-phosphate (Rib-5-P), respectively. This Methylobacterium nodulans (strain LMG 21967 / CNCM I-2342 / ORS 2060) protein is Phosphopentomutase.